We begin with the raw amino-acid sequence, 79 residues long: Ubiquinol-cytochrome c reductase complex assembly factor 5 (79 aa).

The Mitochondrial matrix segment spans residues 1 to 20; sequence MSPYSGSVRRLLDSWPGKKR. A helical membrane pass occupies residues 21-43; the sequence is FGVYRFLPLFFLLGAGLEFSMIN. The Mitochondrial intermembrane segment spans residues 44–79; that stretch reads WTVGETNFYRTFKRRQAKNYVEEQQHLQARAANNTN.

The protein belongs to the UQCC5 family. In terms of assembly, interacts with respiratory complex III components Uqcc1 and RFeSP; the interactions are probably involved in the assembly and stability of the mitochondrial ubiquinol-cytochrome c reductase complex. Interacts with sloth2; the interaction stabilizes both components. As to expression, expressed in the brain.

The protein resides in the mitochondrion inner membrane. It is found in the mitochondrion. In terms of biological role, required for the assembly and stability of the mitochondrial ubiquinol-cytochrome c reductase complex (complex III (CIII) or cytochrome b-c1 complex), a multisubunit transmembrane complex that is part of the mitochondrial electron transport chain (ETC) which drives oxidative phosphorylation. The sequence is that of Ubiquinol-cytochrome c reductase complex assembly factor 5 from Drosophila melanogaster (Fruit fly).